We begin with the raw amino-acid sequence, 328 residues long: 5'-AMP-activated protein kinase subunit gamma (328 aa).

CBS domains follow at residues 42 to 103 (VSYR…PDKF), 123 to 186 (IQPY…CKEI), 199 to 259 (ISTN…YNDL), and 268 to 328 (MRRS…FAES). ADP-binding positions include isoleucine 47, arginine 150, arginine 151, 171–174 (TQYR), 227–228 (SS), and 297–299 (RVH). Arginine 150 is a binding site for AMP. ATP is bound at residue arginine 150. Position 227–228 (227–228 (SS)) interacts with AMP. 227–228 (SS) contributes to the ATP binding site. ATP contacts are provided by residues arginine 300 and 313–318 (VLTLSD). Residue 315–318 (TLSD) coordinates ADP. Residue 315-318 (TLSD) coordinates AMP.

It belongs to the 5'-AMP-activated protein kinase gamma subunit family. AMPK is a heterotrimer of an alpha catalytic subunit, a beta and a gamma non-catalytic subunits.

The protein localises to the nucleus. It localises to the cytoplasm. Functionally, adenine nucleotides-binding subunit gamma of AMP-activated protein kinase (AMPK), an energy sensor protein kinase that plays a key role in regulating cellular energy metabolism. In response to reduction of intracellular ATP levels, AMPK activates energy-producing pathways and inhibits energy-consuming processes: inhibits protein, carbohydrate and lipid biosynthesis, as well as cell growth and proliferation. AMPK acts via direct phosphorylation of metabolic enzymes, and by longer-term effects via phosphorylation of transcription regulators. Gamma non-catalytic subunit mediates binding to AMP, ADP and ATP, leading to activate or inhibit AMPK: AMP-binding results in allosteric activation of alpha catalytic subunit (SNF1) both by inducing phosphorylation and preventing dephosphorylation of catalytic subunits. The polypeptide is 5'-AMP-activated protein kinase subunit gamma (SNF4) (Kluyveromyces lactis (strain ATCC 8585 / CBS 2359 / DSM 70799 / NBRC 1267 / NRRL Y-1140 / WM37) (Yeast)).